The sequence spans 116 residues: T cell receptor alpha variable 19 (116 aa).

Residues Met1–Ala21 form the signal peptide. One can recognise an Ig-like domain in the interval Gln22 to Glu116. Residues Cys43 and Cys112 are joined by a disulfide bond. Asn96 is a glycosylation site (N-linked (GlcNAc...) asparagine).

In terms of assembly, alpha-beta TR is a heterodimer composed of an alpha and beta chain; disulfide-linked. The alpha-beta TR is associated with the transmembrane signaling CD3 coreceptor proteins to form the TR-CD3 (TcR or TCR). The assembly of alpha-beta TR heterodimers with CD3 occurs in the endoplasmic reticulum where a single alpha-beta TR heterodimer associates with one CD3D-CD3E heterodimer, one CD3G-CD3E heterodimer and one CD247 homodimer forming a stable octameric structure. CD3D-CD3E and CD3G-CD3E heterodimers preferentially associate with TR alpha and TR beta chains, respectively. The association of the CD247 homodimer is the last step of TcR assembly in the endoplasmic reticulum and is required for transport to the cell surface.

The protein resides in the cell membrane. Its function is as follows. V region of the variable domain of T cell receptor (TR) alpha chain that participates in the antigen recognition. Alpha-beta T cell receptors are antigen specific receptors which are essential to the immune response and are present on the cell surface of T lymphocytes. Recognize peptide-major histocompatibility (MH) (pMH) complexes that are displayed by antigen presenting cells (APC), a prerequisite for efficient T cell adaptive immunity against pathogens. Binding of alpha-beta TR to pMH complex initiates TR-CD3 clustering on the cell surface and intracellular activation of LCK that phosphorylates the ITAM motifs of CD3G, CD3D, CD3E and CD247 enabling the recruitment of ZAP70. In turn ZAP70 phosphorylates LAT, which recruits numerous signaling molecules to form the LAT signalosome. The LAT signalosome propagates signal branching to three major signaling pathways, the calcium, the mitogen-activated protein kinase (MAPK) kinase and the nuclear factor NF-kappa-B (NF-kB) pathways, leading to the mobilization of transcription factors that are critical for gene expression and essential for T cell growth and differentiation. The T cell repertoire is generated in the thymus, by V-(D)-J rearrangement. This repertoire is then shaped by intrathymic selection events to generate a peripheral T cell pool of self-MH restricted, non-autoaggressive T cells. Post-thymic interaction of alpha-beta TR with the pMH complexes shapes TR structural and functional avidity. This Homo sapiens (Human) protein is T cell receptor alpha variable 19.